The chain runs to 289 residues: S-methyl-5'-thioadenosine phosphorylase (289 aa).

Residues serine 11, 53–54, and 86–87 contribute to the phosphate site; these read RH and SA. Methionine 187 is a binding site for substrate. Threonine 188 is a binding site for phosphate. 211-213 provides a ligand contact to substrate; it reads DYD.

The protein belongs to the PNP/MTAP phosphorylase family. MTAP subfamily. In terms of assembly, homohexamer. Dimer of a homotrimer.

It carries out the reaction S-methyl-5'-thioadenosine + phosphate = 5-(methylsulfanyl)-alpha-D-ribose 1-phosphate + adenine. It functions in the pathway amino-acid biosynthesis; L-methionine biosynthesis via salvage pathway; S-methyl-5-thio-alpha-D-ribose 1-phosphate from S-methyl-5'-thioadenosine (phosphorylase route): step 1/1. Catalyzes the reversible phosphorylation of S-methyl-5'-thioadenosine (MTA) to adenine and 5-methylthioribose-1-phosphate. Involved in the breakdown of MTA, a major by-product of polyamine biosynthesis. Responsible for the first step in the methionine salvage pathway after MTA has been generated from S-adenosylmethionine. Has broad substrate specificity with 6-aminopurine nucleosides as preferred substrates. In Thermosynechococcus vestitus (strain NIES-2133 / IAM M-273 / BP-1), this protein is S-methyl-5'-thioadenosine phosphorylase.